The following is a 703-amino-acid chain: Elongation factor G 1 (703 aa).

A tr-type G domain is found at 8 to 290 (ERYRNIGISA…AVIDFLPSPV (283 aa)). GTP is bound by residues 17–24 (AHIDAGKT), 88–92 (DTPGH), and 142–145 (NKMD).

It belongs to the TRAFAC class translation factor GTPase superfamily. Classic translation factor GTPase family. EF-G/EF-2 subfamily.

The protein localises to the cytoplasm. In terms of biological role, catalyzes the GTP-dependent ribosomal translocation step during translation elongation. During this step, the ribosome changes from the pre-translocational (PRE) to the post-translocational (POST) state as the newly formed A-site-bound peptidyl-tRNA and P-site-bound deacylated tRNA move to the P and E sites, respectively. Catalyzes the coordinated movement of the two tRNA molecules, the mRNA and conformational changes in the ribosome. In Cupriavidus metallidurans (strain ATCC 43123 / DSM 2839 / NBRC 102507 / CH34) (Ralstonia metallidurans), this protein is Elongation factor G 1.